A 219-amino-acid chain; its full sequence is MGMSSLKLLKYVLFIFNLLFWVCGCCILGFGIYFLVQNTYGVLFRNLPFLTLGNILVIVGSIIMVVAFLGCMGSIKENKCLLMSFFVLLLIILLAEVTIAILLFVYEQKLNTLVAEGLNDSIQHYHSDNSTMKAWDFIQTQLQCCGVNGSSDWTSGPPSSCPSGADVQGCYNKAKSWFHSNFLYIGIITICVCVIQVLGMSFALTLNCQIDKTSQALGL.

Residues 1 to 11 lie on the Cytoplasmic side of the membrane; that stretch reads MGMSSLKLLKY. A helical transmembrane segment spans residues 12 to 32; that stretch reads VLFIFNLLFWVCGCCILGFGI. Topologically, residues 33–54 are extracellular; the sequence is YFLVQNTYGVLFRNLPFLTLGN. The chain crosses the membrane as a helical span at residues 55 to 69; the sequence is ILVIVGSIIMVVAFL. The Cytoplasmic portion of the chain corresponds to 70–80; that stretch reads GCMGSIKENKC. A helical transmembrane segment spans residues 81–106; the sequence is LLMSFFVLLLIILLAEVTIAILLFVY. At 107–181 the chain is on the extracellular side; that stretch reads EQKLNTLVAE…NKAKSWFHSN (75 aa). 3 N-linked (GlcNAc...) asparagine glycosylation sites follow: asparagine 119, asparagine 129, and asparagine 148. Residues 182-206 form a helical membrane-spanning segment; that stretch reads FLYIGIITICVCVIQVLGMSFALTL. Topologically, residues 207-219 are cytoplasmic; sequence NCQIDKTSQALGL.

It belongs to the tetraspanin (TM4SF) family. Interacts with SCIMP. Interacts with CD45/PTPRC. Interacts with IL7R. Interacts with RBL2 and PPP2CA.

It is found in the cell membrane. The protein localises to the cell junction. The protein resides in the membrane. Structural component of specialized membrane microdomains known as tetraspanin-enriched microdomains (TERMs), which act as platforms for receptor clustering and signaling. Participates thereby in diverse biological functions such as cell signal transduction, adhesion, migration and protein trafficking. Plays a role in the activation of monocytes and B-cells. Acts as an essential regulator of B-cell development by promoting interleukin-7 receptor/IL7R signaling. Also promotes, in B-cells, the BCR signaling by recruiting PKC to the plasma membrane in order to phosphorylate its substrates. Plays an essential role in lymphocyte homing to lymph nodes by stabilizing L-selectin/SELL cell surface expression. Also mediates metabolic and inflammatory functions in hepatocytes and adipose tissue by promoting TNF-alpha and LPS signaling independent of the immune compartment. Protects hematopoietic stem cell function in response to stress by facilitating DREAM complex activity through association with p130/RBL2 and its phosphatase PP2A. This Mus musculus (Mouse) protein is Leukocyte surface antigen CD53 (Cd53).